We begin with the raw amino-acid sequence, 980 residues long: Ankycorbin (980 aa).

Met-1 carries the N-acetylmethionine modification. At Ser-11 the chain carries Phosphoserine. ANK repeat units lie at residues 18–51 (KNDD…KHDS), 52–81 (EGKT…DVTA), 85–114 (TGHS…PAES), 118–147 (SGKT…PINL), 151–180 (DGNI…DVNS), 184–213 (SGRT…DLNL), and 217–247 (LGYN…DADL). Residues 247-259 (LKTPTKPKQHDQV) show a composition bias toward basic and acidic residues. Residues 247 to 301 (LKTPTKPKQHDQVSKISSERSGTPKKRKAPPPPISPTQLSDVSSPRSITSTPLSG) form a disordered region. Phosphothreonine is present on Thr-249. Residues 270–276 (PKKRKAP) carry the Nuclear localization signal motif. A phosphoserine mark is found at Ser-281, Ser-286, and Ser-293. The span at 282-299 (PTQLSDVSSPRSITSTPL) shows a compositional bias: polar residues. Residues Thr-295 and Thr-297 each carry the phosphothreonine modification. Ser-300, Ser-304, Ser-318, Ser-327, Ser-329, Ser-340, Ser-341, Ser-350, Ser-358, Ser-419, Ser-512, Ser-515, Ser-667, and Ser-915 each carry phosphoserine. Positions 349-374 (LSLLQAKVASLTLHNKELQDKLQAKS) form a coiled coil. Residues 387 to 423 (YHSTQTDLGPSLGKPGETSPPDSKSSPSVLIHSLGKS) are disordered. Positions 425–947 (TDNDVRIQQL…QHQEVISVYR (523 aa)) form a coiled coil.

Interacts with PALLD. Associates with actin. However, does not bind F-actin directly. As to expression, highly expressed in placenta, muscle, kidney and testis. Moderately expressed in heart, brain, lung, liver and intestine. Isoform 2 is widely expressed and expressed in fetal and adult testes, and spermatozoa.

Its subcellular location is the cytoplasm. The protein localises to the cytoskeleton. The protein resides in the stress fiber. It is found in the cell cortex. It localises to the cell junction. Its subcellular location is the nucleus. Functionally, plays a role in actin regulation at the ectoplasmic specialization, a type of cell junction specific to testis. Important for establishment of sperm polarity and normal spermatid adhesion. May also promote integrity of Sertoli cell tight junctions at the blood-testis barrier. The sequence is that of Ankycorbin (RAI14) from Homo sapiens (Human).